We begin with the raw amino-acid sequence, 158 residues long: uncharacterized protein (158 aa).

The protein resides in the mitochondrion. This is an uncharacterized protein from Arabidopsis thaliana (Mouse-ear cress).